Consider the following 302-residue polypeptide: Sushi domain-containing protein 6 (302 aa).

The first 39 residues, 1–39, serve as a signal peptide directing secretion; that stretch reads MCHGKIAPKSSSEFVVTSVGHGVFLQLVILCALLGDGLA. One can recognise a Sushi domain in the interval 40–104; it reads SVCPLPPEPE…TPAMEVSCHL (65 aa). 2 disulfides stabilise this stretch: Cys-42-Cys-89 and Cys-74-Cys-102. Residues 120 to 140 traverse the membrane as a helical segment; it reads IVASTASSVALILLLVVLFVL. Disordered stretches follow at residues 202-241 and 256-302; these read GSAP…CEAW and TSSW…LKEA. Polar residues-rich tracts occupy residues 212–222, 256–267, and 279–290; these read REQQLQGQEAC, TSSWVAGSGSSR, and SDIQSLLSLTSE.

The protein resides in the membrane. Its function is as follows. May play a role in growth-suppressive activity and cell death. May be involved in the production of chemokine molecules in umbilical vein endothelial cells (HUVECs) cultured in THP1 monocyte LPS-induced medium. Plays a role in preventing tumor onset. The chain is Sushi domain-containing protein 6 from Mus musculus (Mouse).